Consider the following 392-residue polypeptide: Formate-dependent phosphoribosylglycinamide formyltransferase (392 aa).

N(1)-(5-phospho-beta-D-ribosyl)glycinamide contacts are provided by residues 22–23 (EL) and glutamate 82. Residues arginine 114, lysine 155, 160–165 (SSGKGQ), 195–198 (EGVV), and glutamate 203 contribute to the ATP site. One can recognise an ATP-grasp domain in the interval 119–308 (RLAAEELQLP…EFALHVRAFL (190 aa)). Residues glutamate 267 and glutamate 279 each contribute to the Mg(2+) site. Residues aspartate 286, lysine 355, and 362–363 (RR) each bind N(1)-(5-phospho-beta-D-ribosyl)glycinamide.

It belongs to the PurK/PurT family. Homodimer.

It catalyses the reaction N(1)-(5-phospho-beta-D-ribosyl)glycinamide + formate + ATP = N(2)-formyl-N(1)-(5-phospho-beta-D-ribosyl)glycinamide + ADP + phosphate + H(+). Its pathway is purine metabolism; IMP biosynthesis via de novo pathway; N(2)-formyl-N(1)-(5-phospho-D-ribosyl)glycinamide from N(1)-(5-phospho-D-ribosyl)glycinamide (formate route): step 1/1. In terms of biological role, involved in the de novo purine biosynthesis. Catalyzes the transfer of formate to 5-phospho-ribosyl-glycinamide (GAR), producing 5-phospho-ribosyl-N-formylglycinamide (FGAR). Formate is provided by PurU via hydrolysis of 10-formyl-tetrahydrofolate. The protein is Formate-dependent phosphoribosylglycinamide formyltransferase of Shigella dysenteriae serotype 1 (strain Sd197).